A 205-amino-acid polypeptide reads, in one-letter code: Helix-loop-helix protein 4 (205 aa).

The segment at Met-3 to Val-16 is basic motif. The bHLH domain maps to Met-3 to Leu-56. Positions His-17 to Leu-56 are helix-loop-helix motif.

In terms of tissue distribution, expressed in the ADL sensory neurons.

The protein localises to the nucleus. Acts as a transcriptional regulator. May mediate transcriptional activation by binding to the E-box motif 5'-CANNTG-3'. Required for the correct morphology, terminal identity and function of the ADL sensory neurons by controlling the expression of the ADL-specific gene repertoire, including chemoreceptor encoding genes, ion channel encoding genes, neuropeptides and the neurotransmitter eat-4. Regulates the expression of the srh-234 chemoreceptor encoding gene in the ADL neurons under feeding conditions. Plays a role in the chemorepulsive response toward ascaroside pheromones mediated by the ADL sensory neurons. In Caenorhabditis elegans, this protein is Helix-loop-helix protein 4 (hlh-4).